Here is a 128-residue protein sequence, read N- to C-terminus: Probable 4-amino-4-deoxy-L-arabinose-phosphoundecaprenol flippase subunit ArnF (128 aa).

The Cytoplasmic segment spans residues 1-2 (MG). The chain crosses the membrane as a helical span at residues 3 to 23 (LMWGLFSVIIASAAQLSLGFA). The Periplasmic portion of the chain corresponds to 24–35 (ASHLPPMTHLWD). The chain crosses the membrane as a helical span at residues 36-56 (FIAALLAFGLDARILLLGLLG). Topologically, residues 57-76 (YLLSVFCWYKTLHKLALSKA) are cytoplasmic. A helical transmembrane segment spans residues 77–97 (YALLSMSYVLVWIASMVLPGW). Residues 98-100 (EGT) lie on the Periplasmic side of the membrane. A helical transmembrane segment spans residues 101-121 (FSLKALLGVACIMSGLMLIFL). The Cytoplasmic segment spans residues 122-128 (PTTKQRY).

It belongs to the ArnF family. In terms of assembly, heterodimer of ArnE and ArnF.

The protein resides in the cell inner membrane. It functions in the pathway bacterial outer membrane biogenesis; lipopolysaccharide biosynthesis. Its function is as follows. Translocates 4-amino-4-deoxy-L-arabinose-phosphoundecaprenol (alpha-L-Ara4N-phosphoundecaprenol) from the cytoplasmic to the periplasmic side of the inner membrane. This Escherichia coli O127:H6 (strain E2348/69 / EPEC) protein is Probable 4-amino-4-deoxy-L-arabinose-phosphoundecaprenol flippase subunit ArnF.